The sequence spans 322 residues: Mas-related G-protein coupled receptor member X3 (322 aa).

Over 1-31 the chain is Extracellular; sequence MDPTIPALGTSQTPINRREETPCYKQTLSLT. Residues 32 to 52 traverse the membrane as a helical segment; sequence VLTCIISLVGLTGNAVVLWLL. The Cytoplasmic segment spans residues 53–60; sequence GFRMRRNA. Residues 61 to 81 traverse the membrane as a helical segment; it reads VSTYILNLAAVDFLFLSGHIV. The Extracellular portion of the chain corresponds to 82 to 96; sequence RSPLRLISIRHPISK. The chain crosses the membrane as a helical span at residues 97–117; it reads IVNPVMTFPYFIGLSMLSAIS. Residues 118-139 lie on the Cytoplasmic side of the membrane; sequence TERCLSVLWPMWYRCRRPRHLS. The helical transmembrane segment at 140–160 threads the bilayer; sequence VVVCVLLWALSLLRSILEWMF. Residues 161–177 are Extracellular-facing; the sequence is CDFLFSGADSVWCETSD. A helical transmembrane segment spans residues 178–198; sequence FITIAWLIFLCVVLCGSSLVL. The Cytoplasmic segment spans residues 199-213; that stretch reads LVRILCGSRKMPLTR. The chain crosses the membrane as a helical span at residues 214–234; that stretch reads LYVTILLTVLVFLLCGLPFGI. At 235-254 the chain is on the extracellular side; the sequence is QWALFSRIHLDWKVLFCHVH. The helical transmembrane segment at 255–275 threads the bilayer; it reads LISVFLSSLNSSANPIIYFFV. The Cytoplasmic segment spans residues 276-322; sequence GSFRQRQNRQNLKLVLQRALQDTPEVDEGGGRLPEETLELSVSRLEQ.

Belongs to the G-protein coupled receptor 1 family. Mas subfamily.

The protein localises to the cell membrane. Functionally, orphan receptor. Probably involved in the function of nociceptive neurons. May regulate nociceptor function and/or development, including the sensation or modulation of pain. Potently activated by enkephalins. The protein is Mas-related G-protein coupled receptor member X3 (MRGPRX3) of Macaca mulatta (Rhesus macaque).